Consider the following 132-residue polypeptide: Small ribosomal subunit protein uS8 (132 aa).

It belongs to the universal ribosomal protein uS8 family. As to quaternary structure, part of the 30S ribosomal subunit. Contacts proteins S5 and S12.

One of the primary rRNA binding proteins, it binds directly to 16S rRNA central domain where it helps coordinate assembly of the platform of the 30S subunit. The chain is Small ribosomal subunit protein uS8 from Roseiflexus castenholzii (strain DSM 13941 / HLO8).